The chain runs to 103 residues: Ghrelin (103 aa).

The first 26 residues, 1-26 (MPLRRRASHMFVLLCALSLCVESVKG), serve as a signal peptide directing secretion. A disordered region spans residues 27–51 (GTSFLSPAQKPQGRRPPRMGRRDVA). Serine 29 carries the O-decanoyl serine; alternate lipid modification. Residue serine 29 is the site of O-hexanoyl serine; alternate attachment. The O-octanoyl serine; alternate moiety is linked to residue serine 29. Glutamine 38 carries the glutamine amide modification. Methionine 45 carries the post-translational modification Methionine amide. Positions 49-103 (DVAEPEIPVIKEDDQFMMSAPFELSVSLSEAEYEKYGPVLQKVLVNLLGDSPLEF) are cleaved as a propeptide — removed in mature form.

It belongs to the motilin family. O-octanoylated by GOAT/MBOAT4. O-octanoylation or O-decanoylation is essential for activity. The O-decanoylated form differs in the length of the carbon backbone of the carboxylic acid forming an ester bond with Ser-29. As to expression, expressed in the telencephalon, hypothalamus, pituitary, intestine, liver, spleen and gill, with expression strongest in the intestine.

The protein resides in the secreted. Its function is as follows. Ligand for growth hormone secretagogue receptor type 1 (GHSR). Induces the release of growth hormone from the pituitary. Induces adiposity and stimulates gastric acid secretion. Involved in growth regulation. Has an appetite-stimulating effect. In Carassius auratus (Goldfish), this protein is Ghrelin (ghrl).